A 187-amino-acid chain; its full sequence is Large ribosomal subunit protein uL6 (187 aa).

It belongs to the universal ribosomal protein uL6 family. Part of the 50S ribosomal subunit.

In terms of biological role, this protein binds to the 23S rRNA, and is important in its secondary structure. It is located near the subunit interface in the base of the L7/L12 stalk, and near the tRNA binding site of the peptidyltransferase center. The chain is Large ribosomal subunit protein uL6 from Chloroflexus aggregans (strain MD-66 / DSM 9485).